Reading from the N-terminus, the 345-residue chain is S-adenosylmethionine:tRNA ribosyltransferase-isomerase (345 aa).

Belongs to the QueA family. In terms of assembly, monomer.

It localises to the cytoplasm. It catalyses the reaction 7-aminomethyl-7-carbaguanosine(34) in tRNA + S-adenosyl-L-methionine = epoxyqueuosine(34) in tRNA + adenine + L-methionine + 2 H(+). It functions in the pathway tRNA modification; tRNA-queuosine biosynthesis. Transfers and isomerizes the ribose moiety from AdoMet to the 7-aminomethyl group of 7-deazaguanine (preQ1-tRNA) to give epoxyqueuosine (oQ-tRNA). The protein is S-adenosylmethionine:tRNA ribosyltransferase-isomerase of Anaeromyxobacter dehalogenans (strain 2CP-1 / ATCC BAA-258).